We begin with the raw amino-acid sequence, 390 residues long: 3,5-dihydroxybiphenyl synthase (390 aa).

Cysteine 161 is an active-site residue.

Belongs to the thiolase-like superfamily. Chalcone/stilbene synthases family. In terms of assembly, homodimer.

It catalyses the reaction benzoyl-CoA + 3 malonyl-CoA + 3 H(+) = biphenyl-3,5-diol + 4 CO2 + 4 CoA. Its function is as follows. Type III polyketide synthase involved in the biosynthesis of the phytoalexins bisphenyls and dibenzofurans. Can also use salicoyl-CoA and malonyl-CoA to produce a diketide intermediate yielding 4-hydroxycoumarin after cyclization and enolization. Can also use m-hydroxybenzoyl-CoA as substrate, producing m-hydroxybenzoyl diacetic acid lactone as a derailment product. No activity with p-hydroxybenzoyl-CoA, CoA-linked cinnamic acids or acetyl-CoA. The protein is 3,5-dihydroxybiphenyl synthase (BIS1) of Sorbus aucuparia (European mountain ash).